The following is a 452-amino-acid chain: Caspase-2 (452 aa).

At Ala-2 the chain carries N-acetylalanine. Positions 2-169 (AASSGRSQSS…TMEHSLDNGD (168 aa)) are excised as a propeptide. Residues 32–121 (MHPDHQETLK…GHLEDLLLTT (90 aa)) enclose the CARD domain. Residue Ser-157 is modified to Phosphoserine. Catalysis depends on residues His-277 and Cys-320. A propeptide spanning residues 326–333 (DRGVDQQD) is cleaved from the precursor. The span at 327–336 (RGVDQQDGKN) shows a compositional bias: basic and acidic residues. The segment at 327 to 349 (RGVDQQDGKNHAQSPGCEESDAG) is disordered. A Phosphoserine modification is found at Ser-340.

The protein belongs to the peptidase C14A family. Heterotetramer that consists of two anti-parallel arranged heterodimers, each one formed by a p18 subunit and a p12 subunit. Forms a complex named the PIDDosome with PIDD1 and CRADD. Interacts with NOL3 (via CARD domain); inhibits CASP2 activity in a phosphorylation-dependent manner. The mature protease can process its own propeptide, but not that of other caspases.

It carries out the reaction Strict requirement for an Asp residue at P1, with 316-Asp being essential for proteolytic activity and has a preferred cleavage sequence of Val-Asp-Val-Ala-Asp-|-.. In terms of biological role, involved in the activation cascade of caspases responsible for apoptosis execution. Might function by either activating some proteins required for cell death or inactivating proteins necessary for cell survival. Associates with PIDD1 and CRADD to form the PIDDosome, a complex that activates CASP2 and triggers apoptosis in response to genotoxic stress. The sequence is that of Caspase-2 (Casp2) from Rattus norvegicus (Rat).